A 414-amino-acid polypeptide reads, in one-letter code: L-cysteine:1D-myo-inositol 2-amino-2-deoxy-alpha-D-glucopyranoside ligase (414 aa).

Cys43 provides a ligand contact to Zn(2+). L-cysteinyl-5'-AMP-binding positions include 43 to 46 (CGIT), Thr58, and 81 to 83 (NIT). Positions 45 to 55 (ITPYDATHLGH) match the 'HIGH' region motif. Positions 189 to 194 (ERGGDP) match the 'ERGGDP' region motif. Trp229 is a binding site for L-cysteinyl-5'-AMP. Position 233 (Cys233) interacts with Zn(2+). An L-cysteinyl-5'-AMP-binding site is contributed by 251-253 (GSD). Position 258 (His258) interacts with Zn(2+). Position 285 (Ile285) interacts with L-cysteinyl-5'-AMP. A 'KMSKS' region motif is present at residues 291 to 295 (KMSKS).

Belongs to the class-I aminoacyl-tRNA synthetase family. MshC subfamily. As to quaternary structure, monomer. Zn(2+) serves as cofactor.

It catalyses the reaction 1D-myo-inositol 2-amino-2-deoxy-alpha-D-glucopyranoside + L-cysteine + ATP = 1D-myo-inositol 2-(L-cysteinylamino)-2-deoxy-alpha-D-glucopyranoside + AMP + diphosphate + H(+). Catalyzes the ATP-dependent condensation of GlcN-Ins and L-cysteine to form L-Cys-GlcN-Ins. This Mycobacterium bovis (strain ATCC BAA-935 / AF2122/97) protein is L-cysteine:1D-myo-inositol 2-amino-2-deoxy-alpha-D-glucopyranoside ligase (mshC).